The primary structure comprises 876 residues: Protein argonaute 17 (876 aa).

The PAZ domain occupies 246–338 (PVVDYVAQLL…LPLEVCKIAE (93 aa)). The 321-residue stretch at 514–834 (LLIVILPNNN…LSSRARCYIK (321 aa)) folds into the Piwi domain. The interval 839-859 (GDSTSHTSLPSEEDSSAASET) is disordered.

This sequence belongs to the argonaute family. Ago subfamily.

Probably involved in the RNA silencing pathway. May bind to short RNAs such as microRNAs (miRNAs) or short interfering RNAs (siRNAs), and represses the translation of mRNAs which are complementary to them. This is Protein argonaute 17 (AGO17) from Oryza sativa subsp. japonica (Rice).